The sequence spans 381 residues: tRNA pseudouridine synthase D (381 aa).

Asp81 serves as the catalytic Nucleophile. Residues 160 to 335 (GMPNYFGSQR…TLGSRRFFWV (176 aa)) enclose the TRUD domain.

It belongs to the pseudouridine synthase TruD family.

The catalysed reaction is uridine(13) in tRNA = pseudouridine(13) in tRNA. In terms of biological role, responsible for synthesis of pseudouridine from uracil-13 in transfer RNAs. This chain is tRNA pseudouridine synthase D, found in Helicobacter pylori (strain HPAG1).